The following is a 396-amino-acid chain: Elongation factor Tu (396 aa).

A tr-type G domain is found at 11–205 (KPHVNIGTIG…TIDEYIPTPV (195 aa)). The tract at residues 20–27 (GHVDHGKT) is G1. 20 to 27 (GHVDHGKT) contributes to the GTP binding site. Thr27 contacts Mg(2+). The G2 stretch occupies residues 61 to 65 (GITIN). The tract at residues 82 to 85 (DAPG) is G3. GTP-binding positions include 82–86 (DAPGH) and 137–140 (NKTD). The segment at 137-140 (NKTD) is G4. The tract at residues 175-177 (SAL) is G5.

The protein belongs to the TRAFAC class translation factor GTPase superfamily. Classic translation factor GTPase family. EF-Tu/EF-1A subfamily. Monomer.

The protein resides in the cytoplasm. The catalysed reaction is GTP + H2O = GDP + phosphate + H(+). Functionally, GTP hydrolase that promotes the GTP-dependent binding of aminoacyl-tRNA to the A-site of ribosomes during protein biosynthesis. The protein is Elongation factor Tu of Lacticaseibacillus casei (strain BL23) (Lactobacillus casei).